The primary structure comprises 758 residues: 5-methyltetrahydropteroyltriglutamate--homocysteine methyltransferase (758 aa).

5-methyltetrahydropteroyltri-L-glutamate-binding positions include 16–19 (RELK) and Lys116. Residues 436–438 (IGS) and Glu489 contribute to the L-homocysteine site. Residues 436–438 (IGS) and Glu489 contribute to the L-methionine site. 5-methyltetrahydropteroyltri-L-glutamate contacts are provided by residues 520-521 (RC) and Trp566. Asp604 serves as a coordination point for L-homocysteine. Position 604 (Asp604) interacts with L-methionine. Glu610 provides a ligand contact to 5-methyltetrahydropteroyltri-L-glutamate. His646, Cys648, and Glu670 together coordinate Zn(2+). Residue His699 is the Proton donor of the active site. Position 731 (Cys731) interacts with Zn(2+).

Belongs to the vitamin-B12 independent methionine synthase family. The cofactor is Zn(2+).

It carries out the reaction 5-methyltetrahydropteroyltri-L-glutamate + L-homocysteine = tetrahydropteroyltri-L-glutamate + L-methionine. The protein operates within amino-acid biosynthesis; L-methionine biosynthesis via de novo pathway; L-methionine from L-homocysteine (MetE route): step 1/1. Its function is as follows. Catalyzes the transfer of a methyl group from 5-methyltetrahydrofolate to homocysteine resulting in methionine formation. This chain is 5-methyltetrahydropteroyltriglutamate--homocysteine methyltransferase, found in Xylella fastidiosa (strain M23).